The chain runs to 433 residues: 23S rRNA (uracil(1939)-C(5))-methyltransferase RlmD (433 aa).

Residues 10–68 (RTTTRQIITVSVNDLDSFGQGVARHNGKTLFIPGLLSQENAEVTVTEDKKQYARAKVVR) enclose the TRAM domain. Cys-81, Cys-87, Cys-90, and Cys-162 together coordinate [4Fe-4S] cluster. Residues Gln-265, Phe-294, Asn-299, Glu-315, Asn-342, and Asp-363 each contribute to the S-adenosyl-L-methionine site. The active-site Nucleophile is the Cys-389.

The protein belongs to the class I-like SAM-binding methyltransferase superfamily. RNA M5U methyltransferase family. RlmD subfamily.

The catalysed reaction is uridine(1939) in 23S rRNA + S-adenosyl-L-methionine = 5-methyluridine(1939) in 23S rRNA + S-adenosyl-L-homocysteine + H(+). Functionally, catalyzes the formation of 5-methyl-uridine at position 1939 (m5U1939) in 23S rRNA. This chain is 23S rRNA (uracil(1939)-C(5))-methyltransferase RlmD, found in Shigella dysenteriae serotype 1 (strain Sd197).